The sequence spans 243 residues: Ras-related protein Rab-12 (243 aa).

The residue at position 1 (methionine 1) is an N-acetylmethionine. The disordered stretch occupies residues 1 to 36 (MDPSAALHRRPAGGGLGAVSPALSGGQARRRKQPPR). Serine 20 and serine 24 each carry phosphoserine. GTP contacts are provided by glycine 51, valine 52, glycine 53, lysine 54, threonine 55, serine 72, and threonine 73. Residue threonine 55 participates in Mg(2+) binding. Short sequence motifs (switch) lie at residues 64–78 (DTFCEACKSTVGVDF) and 96–113 (DTAGQERFNSITSAYYRS). Residues threonine 73 and aspartate 96 each coordinate Mg(2+). Glycine 99 contributes to the GTP binding site. Residue serine 105 is modified to Phosphoserine. Residues asparagine 154, lysine 155, aspartate 157, serine 185, alanine 186, and lysine 187 each coordinate GTP. S-geranylgeranyl cysteine attachment occurs at residues cysteine 242 and cysteine 243.

Belongs to the small GTPase superfamily. Rab family. As to quaternary structure, interacts with RABIF and OPTN. Interacts with LRRK2; interaction facilitates phosphorylation of Ser-105. Interacts with GDI1, GDI2 and CHM; these interactions are disrupted by phosphorylation on Ser-105. Interacts with RILPL1 and RILPL2; these interactions are dependent on phosphorylation of Ser-105. The cofactor is Mg(2+). In terms of processing, phosphorylation of Ser-105 in the switch II region by LRRK2 prevents the association of RAB regulatory proteins, including CHM and RAB GDP dissociation inhibitors GDI1 and GDI2. Highest levels in skeletal and cardiac muscle. Also found in comparable amounts in brain, spinal cord and lung. Also detected in testis where it is expressed by Sertoli cells of the seminiferous tubules (at protein level).

The protein resides in the recycling endosome membrane. It localises to the lysosome membrane. The protein localises to the golgi apparatus membrane. Its subcellular location is the cytoplasmic vesicle. It is found in the autophagosome. The catalysed reaction is GTP + H2O = GDP + phosphate + H(+). With respect to regulation, regulated by guanine nucleotide exchange factors (GEFs) including DENND3 which promote the exchange of bound GDP for free GTP. Regulated by GTPase activating proteins (GAPs) which increase the GTP hydrolysis activity. Inhibited by GDP dissociation inhibitors (GDIs). Functionally, the small GTPases Rab are key regulators of intracellular membrane trafficking, from the formation of transport vesicles to their fusion with membranes. Rabs cycle between an inactive GDP-bound form and an active GTP-bound form that is able to recruit to membranes different sets of downstream effectors directly responsible for vesicle formation, movement, tethering and fusion. RAB12 may play a role in protein transport from recycling endosomes to lysosomes regulating, for instance, the degradation of the transferrin receptor. Involved in autophagy. This Rattus norvegicus (Rat) protein is Ras-related protein Rab-12.